The sequence spans 476 residues: Tryptophan--tRNA ligase, cytoplasmic (476 aa).

Positions 1 to 117 are dispensable to the catalytic activity; the sequence is MADMSNGEQG…LIVRFGSSKI (117 aa). A WHEP-TRS domain is found at 13–69; it reads SPLELFHSIAAQGELVRDLKARNAAKDEIDSAVKMLLSLKTSYKAATGEDYKVDCPP. Residues 63 to 83 form a disordered region; that stretch reads YKVDCPPGDPAPESGEGLDAT. K159 carries the post-translational modification N6-succinyllysine. The short motif at 169–178 is the 'HIGH' region element; sequence PSSEAMHVGH. The short motif at 354 to 358 is the 'KMSKS' region element; the sequence is KMSAS. Phosphoserine is present on S356.

Belongs to the class-I aminoacyl-tRNA synthetase family. In terms of assembly, homodimer. Interacts with oxidized form of GAPDH. Post-translationally, proteolytic cleavage generates 2 forms; T1-TrpRS and T2-TrpRS.

It is found in the cytoplasm. It catalyses the reaction tRNA(Trp) + L-tryptophan + ATP = L-tryptophyl-tRNA(Trp) + AMP + diphosphate + H(+). Functionally, T1-TrpRS has aminoacylation activity while T2-TrpRS lacks it. T1-TrpRS and T2-TrpRS possess angiostatic activity. T2-TrpRS inhibits fluid shear stress-activated responses of endothelial cells. Regulates ERK, Akt, and eNOS activation pathways that are associated with angiogenesis, cytoskeletal reorganization and shear stress-responsive gene expression. The polypeptide is Tryptophan--tRNA ligase, cytoplasmic (WARS1) (Bos taurus (Bovine)).